Consider the following 183-residue polypeptide: Ribosome maturation factor RimP (183 aa).

The protein belongs to the RimP family.

It is found in the cytoplasm. In terms of biological role, required for maturation of 30S ribosomal subunits. This Mycobacterium bovis (strain ATCC BAA-935 / AF2122/97) protein is Ribosome maturation factor RimP.